The chain runs to 98 residues: HssA/B-like protein 36 (98 aa).

Residues 1-29 form a disordered region; it reads MTLFSSISSISNPMTSSKSSISSFGSGTS.

It belongs to the hssA/B family.

The polypeptide is HssA/B-like protein 36 (hssl36) (Dictyostelium discoideum (Social amoeba)).